We begin with the raw amino-acid sequence, 343 residues long: uncharacterized protein (343 aa).

Disordered regions lie at residues 1 to 25, 62 to 119, and 169 to 188; these read MSSK…LSGT, KNIR…DCSD, and NPKI…TKKS. Positions 62 to 71 are enriched in basic residues; the sequence is KNIRQFKKSQ. Over residues 72–81 the composition is skewed to basic and acidic residues; that stretch reads NKTDTEKSGE. A compositionally biased stretch (acidic residues) spans 83–107; sequence NDSDYSDYSDNSDDVDDLDDVDDLN.

This is an uncharacterized protein from Acanthamoeba polyphaga (Amoeba).